A 951-amino-acid chain; its full sequence is MADSDDEYDRKRRDKFRGERESYRTERRDERRPIGGAGGGRDEWSERNPFRGGGAGGGGAPRHRPDYSDYRGPGPRARYGSPVRDMPPPKRMRSDWGDGDGRPGPRYGGYDPYLMQAWTDHYQSMHSAYHHASHPPPVRELPIIGGDTLTQPAMLNLKQFLDTQDENISDSEVMRKYTEYKTDFKRQQLNEFFVAHKDEEWFKNKYHPEDSVNRSEEQRGFLRRRTDVFVELLENGTIGSVKVDSSHGDALIRVLDTCVIKLEGGTDEDLKVLDEKPKEALVFDRKPESVDPTTVVENTPKSPKKEKEEDELPLIVSPQRIALKPVNSDDENWDDAEVEDAPPKKPEEEEPKESEPIPEIKQKQKKEKKKKIKKRKRNSSSDEESSSSESESSSSSSEEEEEDDEKLKAKYDVEDGLRAEQKAEAEKDQAEAAKAKLGSVSPKEEISPEKSAADPEVEGEAKEDGKQAEKSPKSDDEKKQENGDAAKVESAAEPATGDAQGEVKPVTIDLDKVNPPRDMHRTSSIFLRNLAPSITKAEIEALCSRFSGYLRTAIADPLVERRWYRRGWITFTRDVNIKEICWSLNNQRLRDCEMGAIVNRDLSRRVRPANGITAHKQVVRSDIKLCARIVMNLDEKFKLWSEGPLSKPSPASDSEATAANGSGSSYGFNSKNPVLQNITDYLIEEASAEEEELLGLSGDRKDGEGEPIERDEQLLSVLDRLVLYLRIVHSVDYYNHCEYPYEDEMPNRCGIIHARGPAPSRVTSNELNEYIKSYEGKLLQFLTKTALLSEDQIKDLGAKNADTEVEKFVQANTQELAKDKWLCPLSGKKFKGPEFIRKHIFNKHEEKVDEVRKEVQYFNNYLRDPKRPQLPEHPGSVKRPETESVRGPGGYRPPMYTPMSGMPYSFGGHMMGGGRGGRHFPPARRELPLEHHRRLVGYHDLDAPSNSDIFD.

Disordered regions lie at residues 1–108 (MADS…PRYG), 283–515 (FDRK…KVNP), 644–664 (PLSKPSPASDSEATAANGSGS), and 864–893 (DPKRPQLPEHPGSVKRPETESVRGPGGYRP). Basic and acidic residues-rich tracts occupy residues 8 to 33 (YDRKRRDKFRGERESYRTERRDERRP) and 40 to 49 (GRDEWSERNP). Residues 51–60 (RGGGAGGGGA) show a composition bias toward gly residues. Phosphotyrosine is present on Tyr-79. Ser-81 is modified (phosphoserine). Basic and acidic residues predominate over residues 92 to 103 (MRSDWGDGDGRP). Thr-299 carries the post-translational modification Phosphothreonine. Phosphoserine occurs at positions 302, 328, and 354. Acidic residues predominate over residues 328-340 (SDDENWDDAEVED). Over residues 341–362 (APPKKPEEEEPKESEPIPEIKQ) the composition is skewed to basic and acidic residues. Residues 363–378 (KQKKEKKKKIKKRKRN) are compositionally biased toward basic residues. A compositionally biased stretch (low complexity) spans 387–396 (SSESESSSSS). Residues 405–434 (EKLKAKYDVEDGLRAEQKAEAEKDQAEAAK) show a composition bias toward basic and acidic residues. The residue at position 441 (Ser-441) is a Phosphoserine. Over residues 442–487 (PKEEISPEKSAADPEVEGEAKEDGKQAEKSPKSDDEKKQENGDAAK) the composition is skewed to basic and acidic residues. Residues 649-664 (SPASDSEATAANGSGS) are compositionally biased toward polar residues.

The protein belongs to the ARS2 family. As to quaternary structure, interacts with cbp20, Dcr-2 and pasha.

The protein localises to the nucleus. Acts as a mediator between the cap-binding complex (CBC) and RNA-mediated gene silencing (RNAi). Involved in innate immunity via the short interfering RNAs (siRNAs) processing machinery by restricting the viral RNA production. Also involved microRNA (miRNA)-mediated silencing by contributing to the stability and delivery of primary miRNA transcripts to the primary miRNA processing complex containing drosha and pasha. This chain is Serrate RNA effector molecule homolog (Ars2), found in Drosophila persimilis (Fruit fly).